Reading from the N-terminus, the 509-residue chain is Coiled-coil domain-containing protein 181 (509 aa).

Disordered stretches follow at residues 27–122 (INDK…EDEE) and 287–368 (LAQV…NEKK). Composition is skewed to basic and acidic residues over residues 41–58 (ACKK…KETE) and 67–82 (DPDK…RRND). The segment covering 319–333 (RIQSAGVSPVTSTYC) has biased composition (polar residues). Coiled coils occupy residues 335–377 (SPRQ…VFKA) and 418–488 (LKKK…RSKQ). The segment covering 337 to 368 (RQKELQKQLERKRERLKREEEQRKLEEENEKK) has biased composition (basic and acidic residues).

Belongs to the CCDC181 family. As to quaternary structure, homodimer. Interacts with HOOK1. Interacts with HOOK2. Interacts with HOOK3.

It is found in the cytoplasm. The protein resides in the cytoskeleton. It localises to the cell projection. The protein localises to the cilium. Its subcellular location is the flagellum. Microtubule-binding protein that localizes to the microtubular manchette of elongating spermatids. This chain is Coiled-coil domain-containing protein 181, found in Rattus norvegicus (Rat).